The primary structure comprises 355 residues: Probable nitronate monooxygenase (355 aa).

Residues Asn71, Gln175, Gly180, Gly218, and 237 to 240 each bind FMN; that span reads QMGT.

It belongs to the nitronate monooxygenase family. NMO class I subfamily. FMN serves as cofactor.

It carries out the reaction 3 propionate 3-nitronate + 3 O2 + H2O = 3 3-oxopropanoate + 2 nitrate + nitrite + H2O2 + 3 H(+). Its function is as follows. Nitronate monooxygenase that uses molecular oxygen to catalyze the oxidative denitrification of alkyl nitronates. Acts on propionate 3-nitronate (P3N), the presumed physiological substrate. Probably functions in the detoxification of P3N, a metabolic poison produced by plants and fungi as a defense mechanism. This is Probable nitronate monooxygenase from Staphylococcus aureus (strain MRSA252).